The following is a 136-amino-acid chain: Acyl-CoA thioesterase YbgC (136 aa).

The active site involves Asp18.

It belongs to the 4-hydroxybenzoyl-CoA thioesterase family.

Its function is as follows. Displays acyl-CoA thioesterase activity with short chain aliphatic acyl-CoA thioesters, such as propionyl-CoA and butyryl-CoA. Enzyme activity is relatively low, suggesting that the acyl-CoA thioesters used in the assays are not the physiological substrates. Has no detectable activity with 4-hydroxybenzoyl-CoA, lauroyl-CoA (C12:0), arachidoyl-CoA (C20:0) and arachidonoyl-CoA (C20:4). This chain is Acyl-CoA thioesterase YbgC (ybgC), found in Haemophilus influenzae (strain ATCC 51907 / DSM 11121 / KW20 / Rd).